The chain runs to 379 residues: Cytochrome b (379 aa).

4 helical membrane-spanning segments follow: residues 33–53, 77–98, 113–133, and 178–198; these read FGSL…FLAM, WLIR…YLHI, WNIG…GYVL, and FFAF…LHLL. Heme b is bound by residues histidine 83 and histidine 97. 2 residues coordinate heme b: histidine 182 and histidine 196. Histidine 201 serves as a coordination point for a ubiquinone. Transmembrane regions (helical) follow at residues 226–246, 288–308, 320–340, and 347–367; these read YKDL…ALFY, LGGV…PILH, ASQL…WIGG, and YIII…VLNP.

The protein belongs to the cytochrome b family. The cytochrome bc1 complex contains 3 respiratory subunits (MT-CYB, CYC1 and UQCRFS1), 2 core proteins (UQCRC1 and UQCRC2) and probably 6 low-molecular weight proteins. Heme b serves as cofactor.

The protein resides in the mitochondrion inner membrane. Component of the ubiquinol-cytochrome c reductase complex (complex III or cytochrome b-c1 complex) that is part of the mitochondrial respiratory chain. The b-c1 complex mediates electron transfer from ubiquinol to cytochrome c. Contributes to the generation of a proton gradient across the mitochondrial membrane that is then used for ATP synthesis. The sequence is that of Cytochrome b (mt-cyb) from Anguilla anguilla (European freshwater eel).